Reading from the N-terminus, the 169-residue chain is uncharacterized protein (169 aa).

Residues 144 to 157 (AEAHSASPASSDSS) show a composition bias toward low complexity. Residues 144–169 (AEAHSASPASSDSSPLTNNIRPISIM) form a disordered region. Positions 158-169 (PLTNNIRPISIM) are enriched in polar residues.

This is an uncharacterized protein from Saccharomyces cerevisiae (strain ATCC 204508 / S288c) (Baker's yeast).